The following is a 561-amino-acid chain: PR domain zinc finger protein 14 (561 aa).

The tract at residues 1-20 is disordered; it reads MALPPSGETQSQDKANYLPQ. Polar residues predominate over residues 7-20; the sequence is GETQSQDKANYLPQ. The interval 184–373 is interaction with CBFA2T2; it reads GFNFTEEELS…GVPMNLRVTE (190 aa). In terms of domain architecture, SET spans 241-356; the sequence is EGLCLMQTSF…RNQELLVWYG (116 aa). Tyr-355 serves as a coordination point for S-adenosyl-L-methionine. A C2H2-type 1; atypical zinc finger spans residues 390–416; sequence YRCERCGKVFTYKYYRDKHLKYTPCVD. 5 C2H2-type zinc fingers span residues 422–445, 451–473, 479–501, 507–530, and 536–558; these read FPCS…LHVH, YLCS…MRVH, YQCV…IRQH, FKCK…RRSH, and SSCD…MRLH.

It belongs to the class V-like SAM-binding methyltransferase superfamily. In terms of assembly, interacts with CBFA2T2. In terms of tissue distribution, restricted to embryonic stem cells and primordial germ cells. Not detected in epiblast-derived stem cells.

The protein localises to the nucleus. Transcription factor that has both positive and negative roles on transcription. Plays a role in cellular pluripotency. Essential for germ cell development at 2 levels: the reacquisition of potential pluripotency, including SOX2 up-regulation, and successful epigenetic reprogramming, characterized by EHMT1 repression. Its association with CBFA2T2 is required for the functions in pluripotency and germ cell formation. The protein is PR domain zinc finger protein 14 (Prdm14) of Mus musculus (Mouse).